A 218-amino-acid chain; its full sequence is MEWSQIFHDITTKHDFKAMHDFLEKEYSTAIVYPDRENIYQAFDLTPFENIKVVILGQDPYHGPNQAHGLAFSVQPNAKFPPSLRNMYKELADDIGCVRQTPHLQDWAREGVLLLNTVLTVRQGEANSHRDIGWETFTDEIIKAVSDYKEHVVFILWGKPAQQKIKLIDTSKHCIIKSVHPSPLSAYRGFFGSKPYSKANAYLESVGKSPINWCESEA.

Residue aspartate 59 is the Proton acceptor of the active site.

This sequence belongs to the uracil-DNA glycosylase (UDG) superfamily. UNG family.

It localises to the cytoplasm. It catalyses the reaction Hydrolyzes single-stranded DNA or mismatched double-stranded DNA and polynucleotides, releasing free uracil.. Its function is as follows. Excises uracil residues from the DNA which can arise as a result of misincorporation of dUMP residues by DNA polymerase or due to deamination of cytosine. This is Uracil-DNA glycosylase from Staphylococcus aureus (strain JH1).